The chain runs to 189 residues: Putative manganese efflux pump MntP (189 aa).

Helical transmembrane passes span 3 to 23 (LSATLVLAFAMSMDAFAASIG), 41 to 61 (LIFGVIEAITPLIGWCIGLFA), 65 to 85 (ILEWDHWIAFSLLFILGCRMI), 104 to 124 (FWVLVMTAIATSLDAMAIGVG), 132 to 152 (IVHTAMAIGLATMIMATLGML), and 165 to 185 (AEIIGGIVLIGIGFNILYEHI).

Belongs to the MntP (TC 9.B.29) family.

Its subcellular location is the cell inner membrane. In terms of biological role, probably functions as a manganese efflux pump. The protein is Putative manganese efflux pump MntP of Yersinia enterocolitica serotype O:8 / biotype 1B (strain NCTC 13174 / 8081).